The following is a 649-amino-acid chain: Serine/threonine-protein kinase par-4 (649 aa).

The span at 1–11 (MEGPSSSSVPT) shows a compositional bias: polar residues. Residues 1–132 (MEGPSSSSVP…DEEAETPEEQ (132 aa)) are disordered. The segment covering 45–55 (NTEKMEKEKKP) has biased composition (basic and acidic residues). 2 stretches are compositionally biased toward acidic residues: residues 64 to 77 (PDYD…GSCE) and 117 to 129 (DDME…AETP). One can recognise a Protein kinase domain in the interval 197–460 (YLWGGIIGTG…ISDVMQHPWF (264 aa)). Residues 203–211 (IGTGSYGKV) and lysine 226 each bind ATP. Aspartate 324 acts as the Proton acceptor in catalysis. The interval 548-649 (TLEKRPGDGP…CIFRSRTDSS (102 aa)) is disordered. Positions 597 to 609 (AVEVVEAVAAPEA) are enriched in low complexity.

The protein belongs to the protein kinase superfamily. CAMK Ser/Thr protein kinase family. LKB1 subfamily. Mg(2+) is required as a cofactor. Requires Mn(2+) as cofactor.

The protein localises to the cytoplasm. Its subcellular location is the cell cortex. It carries out the reaction L-seryl-[protein] + ATP = O-phospho-L-seryl-[protein] + ADP + H(+). It catalyses the reaction L-threonyl-[protein] + ATP = O-phospho-L-threonyl-[protein] + ADP + H(+). Required for cytoplasmic partitioning and asymmetric cell division in early embryogenesis. Phosphorylates and restricts the asymmetry effectors mex-5 and mex-6 to the anterior cytoplasm of the zygote and maintains these phosphorylations until fertilization. Phosphorylates and regulates aak-2 in response to oxidative stress. May also play a role in motility, behavioral response, regulation of lifespan and dauer formation through this pathway. The chain is Serine/threonine-protein kinase par-4 from Caenorhabditis briggsae.